The following is a 340-amino-acid chain: Olfactory receptor 5T3 (340 aa).

Over 1–55 (MDSTFTGYNLYNLQVKTEMDKLSSGLDIYRNPLKNKTEVTMFILTGFTDDFELQV) the chain is Extracellular. A glycan (N-linked (GlcNAc...) asparagine) is linked at asparagine 35. A helical transmembrane segment spans residues 56 to 76 (FLFLLFFAIYLFTLIGNLGLV). Residues 77 to 84 (VLVIEDSW) lie on the Cytoplasmic side of the membrane. Residues 85-105 (LHNPMYYFLSVLSFLDACYST) traverse the membrane as a helical segment. The Extracellular portion of the chain corresponds to 106–129 (VVTPKMLVNFLAKNKSISFIGCAT). An N-linked (GlcNAc...) asparagine glycan is attached at asparagine 119. A disulfide bridge links cysteine 127 with cysteine 219. Residues 130–150 (QMLLFVTFGTTECFLLAAMAY) traverse the membrane as a helical segment. At 151 to 169 (DHYVAIYNPLLYSVSMSPR) the chain is on the cytoplasmic side. Residues 170 to 190 (VYVPLITASYVAGILHATIHI) form a helical membrane-spanning segment. The Extracellular segment spans residues 191-226 (VATFSLSFCGSNEIRHVFCDMPPLLAISCSDTHTNQ). A helical transmembrane segment spans residues 227-247 (LLLFYFVGSIEIVTILIVLIS). Residues 248-267 (CDFILLSILKMHSAKGRQKA) lie on the Cytoplasmic side of the membrane. A helical transmembrane segment spans residues 268–288 (FSTCGSHLTGVTIYHGTILVS). Residues 289–301 (YMRPSSSYASDHD) are Extracellular-facing. Residues 302–322 (IIVSIFYTIVIPKLNPIIYSL) traverse the membrane as a helical segment. The Cytoplasmic segment spans residues 323-340 (RNKEVKKAVKKMLKLVYK).

It belongs to the G-protein coupled receptor 1 family.

It localises to the cell membrane. In terms of biological role, odorant receptor. The protein is Olfactory receptor 5T3 (OR5T3) of Homo sapiens (Human).